We begin with the raw amino-acid sequence, 139 residues long: Nucleoside diphosphate kinase (139 aa).

Positions 11, 59, 87, 93, 104, and 114 each coordinate ATP. Histidine 117 functions as the Pros-phosphohistidine intermediate in the catalytic mechanism.

The protein belongs to the NDK family. Homotetramer. Requires Mg(2+) as cofactor.

Its subcellular location is the cytoplasm. The catalysed reaction is a 2'-deoxyribonucleoside 5'-diphosphate + ATP = a 2'-deoxyribonucleoside 5'-triphosphate + ADP. The enzyme catalyses a ribonucleoside 5'-diphosphate + ATP = a ribonucleoside 5'-triphosphate + ADP. Functionally, major role in the synthesis of nucleoside triphosphates other than ATP. The ATP gamma phosphate is transferred to the NDP beta phosphate via a ping-pong mechanism, using a phosphorylated active-site intermediate. The chain is Nucleoside diphosphate kinase from Wolbachia sp. subsp. Drosophila simulans (strain wRi).